Reading from the N-terminus, the 141-residue chain is Cholinesterase (141 aa).

An N-linked (GlcNAc...) asparagine glycan is attached at Asn-39. Residue 49 to 50 (GG) coordinates substrate. The active-site Acyl-ester intermediate is the Ser-131. Phosphoserine is present on Ser-131.

This sequence belongs to the type-B carboxylesterase/lipase family. In terms of assembly, homotetramer; disulfide-linked. Dimer of dimers. In terms of tissue distribution, present in most cells except erythrocytes.

The protein resides in the secreted. The catalysed reaction is an acylcholine + H2O = a carboxylate + choline + H(+). Esterase with broad substrate specificity. Contributes to the inactivation of the neurotransmitter acetylcholine. Can degrade neurotoxic organophosphate esters. The sequence is that of Cholinesterase (BCHE) from Sus scrofa (Pig).